Reading from the N-terminus, the 99-residue chain is MNQERVFKVLLGPHISEKATVLADKQGQFVFKVATDATKLEIKKAVESLFNVKVERVTTQNVLGKSKRTARGLGKRNDWKKAVISLQPGQDLDFTSSAE.

The protein belongs to the universal ribosomal protein uL23 family. As to quaternary structure, part of the 50S ribosomal subunit. Contacts protein L29, and trigger factor when it is bound to the ribosome.

Its function is as follows. One of the early assembly proteins it binds 23S rRNA. One of the proteins that surrounds the polypeptide exit tunnel on the outside of the ribosome. Forms the main docking site for trigger factor binding to the ribosome. In Ectopseudomonas mendocina (strain ymp) (Pseudomonas mendocina), this protein is Large ribosomal subunit protein uL23.